The primary structure comprises 141 residues: Cystatin (141 aa).

Positions Met-1–Met-26 are cleaved as a signal peptide. The region spanning Gly-29–Trp-129 is the Cystatin domain. Residues Gln-73 to Gly-77 carry the Secondary area of contact motif. 2 cysteine pairs are disulfide-bonded: Cys-91/Cys-107 and Cys-120/Cys-140.

It belongs to the cystatin family. As to expression, expressed at a low level by the venom gland (at protein level).

The protein resides in the secreted. Its function is as follows. Inhibits various C1 cysteine proteases including cathepsin L, papain and cathepsin B. This protein has no toxic activity and its function in the venom is unknown. It may play a role as a housekeeping or regulatory protein. This is Cystatin from Naja kaouthia (Monocled cobra).